Consider the following 204-residue polypeptide: Casparian strip membrane protein 2 (204 aa).

Over 1 to 42 the chain is Cytoplasmic; that stretch reads MKNESTTIDVPAESSSAMKGKAPLIGVARDHTTSGSGGYNRG. A helical transmembrane segment spans residues 43–63; that stretch reads LSIFDFLLRLAAIVAALAAAA. Residues 64–92 lie on the Extracellular side of the membrane; that stretch reads TMGTSDETLPFFTQFLQFEASYDDLPTFQ. Residues 93–113 traverse the membrane as a helical segment; the sequence is FFVIAMALVGGYLVLSLPISV. The Cytoplasmic segment spans residues 114 to 125; sequence VTILRPLATAPR. The chain crosses the membrane as a helical span at residues 126 to 146; that stretch reads LLLLVLDTAVLALNTAAASSA. Residues 147 to 178 lie on the Extracellular side of the membrane; the sequence is AAISYLAHSGNQNTNWLPICQQFGDFCQKSSG. The chain crosses the membrane as a helical span at residues 179–199; sequence AVVSAFISVVFFTILVVISGV. The Cytoplasmic segment spans residues 200–204; it reads ALKRH.

The protein belongs to the Casparian strip membrane proteins (CASP) family. As to quaternary structure, homodimer and heterodimers.

The protein resides in the cell membrane. Its function is as follows. Regulates membrane-cell wall junctions and localized cell wall deposition. Required for establishment of the Casparian strip membrane domain (CSD) and the subsequent formation of Casparian strips, a cell wall modification of the root endodermis that determines an apoplastic barrier between the intraorganismal apoplasm and the extraorganismal apoplasm and prevents lateral diffusion. This is Casparian strip membrane protein 2 from Arabidopsis lyrata subsp. lyrata (Lyre-leaved rock-cress).